The sequence spans 561 residues: Nucleoprotein (561 aa).

The segment at 53–237 (MRKDKRSEAD…ITQEPAQINI (185 aa)) is binding site for the cap structure m7GTP. Positions 380 and 382 each coordinate Mn(2+). The Zn(2+) site is built by E390, C497, H500, and C521. D525 contributes to the Mn(2+) binding site.

Belongs to the arenaviridae nucleocapsid protein family. In terms of assembly, homomultimerizes to form the nucleocapsid. Binds to viral genomic RNA. Interacts with glycoprotein G2. Interacts with protein Z; this interaction probably directs the encapsidated genome to budding sites. Interacts with protein L; this interaction does not interfere with Z-L interaction. Interacts with host IKBKE (via Protein kinase domain); the interaction inhibits IKBKE kinase activity.

Its subcellular location is the virion. It localises to the host cytoplasm. Functionally, encapsidates the genome, protecting it from nucleases. The encapsidated genomic RNA is termed the nucleocapsid (NC). Serves as template for viral transcription and replication. The increased presence of protein N in host cell does not seem to trigger the switch from transcription to replication as observed in other negative strain RNA viruses. Through the interaction with host IKBKE, strongly inhibits the phosphorylation and nuclear translocation of host IRF3, a protein involved in interferon activation pathway, leading to the inhibition of interferon-beta and IRF3-dependent promoters activation. Also encodes a functional 3'-5' exoribonuclease that degrades preferentially dsRNA substrates and thereby participates in the suppression of interferon induction. The polypeptide is Nucleoprotein (Allpahuayo mammarenavirus (isolate Rat/Peru/CLHP-2472/1997) (ALLV)).